The sequence spans 222 residues: Collectrin (222 aa).

The signal sequence occupies residues 1 to 14; that stretch reads MLWLLFFLVTAIHA. The Extracellular segment spans residues 15 to 141; the sequence is ELCQPGAENA…LAPPMDPSVP (127 aa). The 202-residue stretch at 21–222 folds into the Collectrin-like domain; sequence AENAFKVRLS…MTEDERLTPL (202 aa). Asparagine 76 and asparagine 93 each carry an N-linked (GlcNAc...) asparagine glycan. A helical membrane pass occupies residues 142-162; that stretch reads IWIIIFGVIFCIIIVAIALLI. Over 163–222 the chain is Cytoplasmic; the sequence is LSGIWQRRRKNKEPSEVDDAEDKCENMITIENGIPSDPLDMKGGHINDAFMTEDERLTPL. Phosphothreonine is present on residues threonine 214 and threonine 220.

The protein belongs to the CLTRN family. As to quaternary structure, monomer. Homodimer; dimerization prevents CLTRN cleavage by BACE2. Interacts with SLC6A18; this interaction regulates the trafficking of SLC6A18 to the cell membrane and its amino acid transporter activity. Interacts with SLC6A19; this interaction regulates the trafficking of SLC6A19 to the cell membrane and its amino acid transporter activity. Interacts with SNAPIN. Glycosylated. Glycosylation is required for plasma membrane localization and for its cleavage by BACE2. Post-translationally, proteolytically processed in pancreatic beta cells by BACE2 leading to the generation and extracellular release of soluble CLTRN, and a corresponding cell-associated C-terminal fragment which is later cleaved by gamma-secretase. This shedding process inactivates CLTRN. Three cleavage sites have been identified for BACE2, two clustered sites after Phe-116 and Leu-118 and a more membrane proximal site at Phe-125; the preferred BACE2 cleavage site seems to be between Phe-125 and Leu-126, Phe-116 and Leu-118 act as alternative sites. Kidney; collecting ducts. Pancreas; beta cells of islets.

The protein resides in the cell membrane. Its function is as follows. Plays an important role in amino acid transport by acting as binding partner of amino acid transporters SLC6A18 and SLC6A19, regulating their trafficking on the cell surface and their amino acid transporter activity. May also play a role in trafficking of amino acid transporters SLC3A1 and SLC7A9 to the renal cortical cell membrane. Regulator of SNARE complex function. Stimulator of beta cell replication. This is Collectrin from Homo sapiens (Human).